We begin with the raw amino-acid sequence, 69 residues long: Sec-independent protein translocase protein TatA (69 aa).

Residues 1–21 (MFGLGGQELVLILLIILLLFG) form a helical membrane-spanning segment. Residues 48–69 (EELNKAVDDTPEKEKKSSSEKS) are disordered.

It belongs to the TatA/E family. In terms of assembly, forms a complex with TatC.

The protein resides in the cell inner membrane. Functionally, part of the twin-arginine translocation (Tat) system that transports large folded proteins containing a characteristic twin-arginine motif in their signal peptide across membranes. TatA could form the protein-conducting channel of the Tat system. This chain is Sec-independent protein translocase protein TatA, found in Chlorobium phaeobacteroides (strain BS1).